We begin with the raw amino-acid sequence, 417 residues long: MMPTKPLAEADPQIAQLIREETRRQAEGLELIASENFVSPAVMEAMGSTLTNKYAEGYPGKRYYGGCEVVDKVEQLAIDRAKQLFGAEHANVQPHSGSQANMAAYFALATPGDTVLAMSLNFGGHLTHGSPVNFSGKLFKIVPYGLKQSDETIDMDEVARLAREHRPKVLMVGASAYPRTLHFDRFAGIAREVGAALVVDMAHIAGLVAAGLHPNPVPHAEIVTTTTHKTLRGPRGGLILTREAHAKVLNSQIFPGIQGGPLEHVIAAKAVAFHEALQPSFKEYQRRIVENAQALAEGLKEAGLRLVSGGTDNHLMLVDLRPKKLTGKIGEEALGKAGITVNKNMIPWDPEKPMTTSGIRVGTPALTTRGMGPGEMATVASLIGRVLDAPADEKVIAAVRGEVRELCAQFPMYQDRL.

(6S)-5,6,7,8-tetrahydrofolate is bound by residues leucine 120 and 124 to 126; that span reads GHL. The residue at position 229 (lysine 229) is an N6-(pyridoxal phosphate)lysine.

This sequence belongs to the SHMT family. Homodimer. Pyridoxal 5'-phosphate serves as cofactor.

It is found in the cytoplasm. It catalyses the reaction (6R)-5,10-methylene-5,6,7,8-tetrahydrofolate + glycine + H2O = (6S)-5,6,7,8-tetrahydrofolate + L-serine. Its pathway is one-carbon metabolism; tetrahydrofolate interconversion. The protein operates within amino-acid biosynthesis; glycine biosynthesis; glycine from L-serine: step 1/1. Functionally, catalyzes the reversible interconversion of serine and glycine with tetrahydrofolate (THF) serving as the one-carbon carrier. This reaction serves as the major source of one-carbon groups required for the biosynthesis of purines, thymidylate, methionine, and other important biomolecules. Also exhibits THF-independent aldolase activity toward beta-hydroxyamino acids, producing glycine and aldehydes, via a retro-aldol mechanism. This chain is Serine hydroxymethyltransferase, found in Anaeromyxobacter sp. (strain Fw109-5).